We begin with the raw amino-acid sequence, 226 residues long: Gap junction beta-2 protein (226 aa).

Residues 2 to 13 (DWGTLQTILGGV) lie within the membrane without spanning it. Residues 14–20 (NKHSTSI) lie on the Cytoplasmic side of the membrane. A helical transmembrane segment spans residues 21-40 (GKIWLTVLFIFRIMILVVAA). Over 41–73 (KEVWGDEQADFVCNTLQPGCKNVCYDHYFPISH) the chain is Extracellular. Ca(2+) is bound by residues E42, G45, and E47. 3 cysteine pairs are disulfide-bonded: C53-C180, C60-C174, and C64-C169. A helical membrane pass occupies residues 74–94 (IRLWALQLIFVSTPALLVAMH). At 95 to 135 (VAYRRHEKKRKFIKGEIKSEFKDIEEIKTQKVRIEGSLWWT) the chain is on the cytoplasmic side. The chain crosses the membrane as a helical span at residues 136–156 (YTSSIFFRVIFEAAFMYVFYV). Residues 157–189 (MYDGFSMQRLVKCNAWPCPNTVDCFVSRPTEKT) lie on the Extracellular side of the membrane. A helical membrane pass occupies residues 190-210 (VFTVFMIAVSGICILLNVTEL). At 211-226 (CYLLIRYCSGKSKKPV) the chain is on the cytoplasmic side.

Belongs to the connexin family. Beta-type (group I) subfamily. A hemichannel or connexon is composed of a hexamer of connexins. A functional gap junction is formed by the apposition of two hemichannels. Forms heteromeric channels with GJB4. Interacts with CNST.

It is found in the cell membrane. The protein localises to the cell junction. The protein resides in the gap junction. Its function is as follows. Structural component of gap junctions. Gap junctions are dodecameric channels that connect the cytoplasm of adjoining cells. They are formed by the docking of two hexameric hemichannels, one from each cell membrane. Small molecules and ions diffuse from one cell to a neighboring cell via the central pore. This chain is Gap junction beta-2 protein (GJB2), found in Gorilla gorilla gorilla (Western lowland gorilla).